We begin with the raw amino-acid sequence, 186 residues long: MTDIARIIEVVEPEAKALGFDLVRVRYFKGGEIGDEEHTLQIMAERPDTGQLVIEDCAALSRRVSDRFDELEEAGDVLIEDAYRLEVSSPGIDRPLTRAKDFAAWIGHEARVELSELLDNRKRFRGELKGFDAETQAISIEDDGVVFEVPFDLVSNAKLILTDKLIAASRPLDTSGADEILEEQED.

This sequence belongs to the RimP family.

The protein localises to the cytoplasm. Its function is as follows. Required for maturation of 30S ribosomal subunits. In Novosphingobium aromaticivorans (strain ATCC 700278 / DSM 12444 / CCUG 56034 / CIP 105152 / NBRC 16084 / F199), this protein is Ribosome maturation factor RimP.